A 102-amino-acid polypeptide reads, in one-letter code: Antitoxin VapB46 (102 aa).

It belongs to the phD/YefM antitoxin family.

In terms of biological role, antitoxin component of a type II toxin-antitoxin (TA) system. Neutralizes the effect of cognate toxin VapC46. This is Antitoxin VapB46 (vapB46) from Mycobacterium tuberculosis (strain CDC 1551 / Oshkosh).